Here is a 242-residue protein sequence, read N- to C-terminus: MTSGFALDVRNWTETLGWQPSPQQQQQFEALYHGIIAGNQRLNLTRITDPAEFTEKHLWDSLYGLRPLLTDDWSGEIIDIGTGGGFPGLPAAIALTKSRVMLLDSTRKKIQFLQTLAQELGLSNVTVAVGRAEEWGRDRRQRARYDWATIRAVGPATVCAEYCLPLLKIGGKAVLYRGQWTEEEAIALDRAVTILGGEVVDVSATFLPESGAERHCITLQKTAQTPAAYPRMVGLPSQKPLG.

Residues Gly-81, Phe-86, 104–106, 132–133, and Arg-151 each bind S-adenosyl-L-methionine; these read DST and AE.

This sequence belongs to the methyltransferase superfamily. RNA methyltransferase RsmG family.

The protein resides in the cytoplasm. In terms of biological role, specifically methylates the N7 position of a guanine in 16S rRNA. The polypeptide is Ribosomal RNA small subunit methyltransferase G (Synechococcus elongatus (strain ATCC 33912 / PCC 7942 / FACHB-805) (Anacystis nidulans R2)).